The chain runs to 96 residues: Invertase 7 (96 aa).

Residues 1–19 form the signal peptide; it reads MLLQAFIFLLAGFAAKISA. N-linked (GlcNAc...) asparagine glycosylation is present at N23. Substrate contacts are provided by residues 39 to 42 and Q60; that span reads WMND. D42 is an active-site residue. N64 and N76 each carry an N-linked (GlcNAc...) asparagine glycan.

This sequence belongs to the glycosyl hydrolase 32 family.

The enzyme catalyses Hydrolysis of terminal non-reducing beta-D-fructofuranoside residues in beta-D-fructofuranosides.. In Saccharomyces cerevisiae (Baker's yeast), this protein is Invertase 7 (SUC7).